Consider the following 399-residue polypeptide: Formate-dependent phosphoribosylglycinamide formyltransferase (399 aa).

Residues 8-9 (EL) and Glu-68 each bind N(1)-(5-phospho-beta-D-ribosyl)glycinamide. ATP contacts are provided by residues Arg-100, Lys-141, 146 to 151 (SSGHGQ), 185 to 188 (EALA), and Glu-193. Positions 105 to 308 (VLAHEELGLP…EFALHARAIL (204 aa)) constitute an ATP-grasp domain. Residues Glu-266 and Glu-279 each coordinate Mg(2+). Residues Asp-286, Lys-361, and 368 to 369 (RR) contribute to the N(1)-(5-phospho-beta-D-ribosyl)glycinamide site.

The protein belongs to the PurK/PurT family. As to quaternary structure, homodimer.

The catalysed reaction is N(1)-(5-phospho-beta-D-ribosyl)glycinamide + formate + ATP = N(2)-formyl-N(1)-(5-phospho-beta-D-ribosyl)glycinamide + ADP + phosphate + H(+). The protein operates within purine metabolism; IMP biosynthesis via de novo pathway; N(2)-formyl-N(1)-(5-phospho-D-ribosyl)glycinamide from N(1)-(5-phospho-D-ribosyl)glycinamide (formate route): step 1/1. Its function is as follows. Involved in the de novo purine biosynthesis. Catalyzes the transfer of formate to 5-phospho-ribosyl-glycinamide (GAR), producing 5-phospho-ribosyl-N-formylglycinamide (FGAR). Formate is provided by PurU via hydrolysis of 10-formyl-tetrahydrofolate. The sequence is that of Formate-dependent phosphoribosylglycinamide formyltransferase from Bifidobacterium longum (strain NCC 2705).